We begin with the raw amino-acid sequence, 374 residues long: Putative zinc metalloprotease R01501 (374 aa).

Residue His-26 participates in Zn(2+) binding. Glu-27 is a catalytic residue. His-30 serves as a coordination point for Zn(2+). The next 4 helical transmembrane spans lie at 36–55 (WSGI…LFGW), 112–134 (AATV…AVLF), 301–323 (VLNF…VPVL), and 348–367 (LAFR…AAWN). In terms of domain architecture, PDZ spans 126 to 199 (AIAIFAVLFS…LPITVRIERE (74 aa)).

This sequence belongs to the peptidase M50B family. It depends on Zn(2+) as a cofactor.

It localises to the cell inner membrane. In Rhizobium meliloti (strain 1021) (Ensifer meliloti), this protein is Putative zinc metalloprotease R01501.